The following is a 397-amino-acid chain: Probable sugar efflux transporter (397 aa).

Transmembrane regions (helical) follow at residues 15–35 (VIVM…PVAL), 51–71 (GLMI…CMLM), 80–100 (LLIS…FAWN), 103–123 (VLLI…SITA), 137–157 (QALG…LPLG), 169–189 (TFTL…RLLP), 209–229 (PMLI…FTAY), 246–266 (KATA…VLFS), 277–297 (LLSS…VSGI), 299–319 (GAIF…SLAM), 333–353 (VATA…ALIG), and 365–385 (IGYV…LMFL).

The protein belongs to the major facilitator superfamily. SotB (TC 2.A.1.2) family.

It is found in the cell inner membrane. Its function is as follows. Involved in the efflux of sugars. The physiological role may be the reduction of the intracellular concentration of toxic sugars or sugar metabolites. The chain is Probable sugar efflux transporter from Mannheimia succiniciproducens (strain KCTC 0769BP / MBEL55E).